Here is a 440-residue protein sequence, read N- to C-terminus: Oligodendrocyte-myelin glycoprotein (440 aa).

Residues 1 to 24 (MEYQILKMSLCLFILLFLTPGILC) form the signal peptide. One can recognise an LRRNT domain in the interval 25-55 (ICPLQCICTERHRHVDCSGRNLSTLPSGLQE). Asn45 and Asn61 each carry an N-linked (GlcNAc...) asparagine glycan. LRR repeat units lie at residues 56 to 77 (NIIH…LTQY), 79 to 100 (NLRT…LPRS), 101 to 121 (LWNM…DTAY), 124 to 145 (NLKY…KNTL), 147 to 168 (SLEV…MPSK), 169 to 189 (LHIV…TLIN), 192 to 213 (NLTH…SFDQ), and 216 to 239 (QLQE…TYLL). N-linked (GlcNAc...) asparagine glycosylation is present at Asn103. N-linked (GlcNAc...) asparagine glycosylation is found at Asn152, Asn176, Asn189, Asn192, and Asn234. Ser/Thr-rich repeat units lie at residues 229-270 (CDHK…YPTP), 271-292 (SGFT…INSL), 293-335 (SVVT…VPYP), 336-377 (EDTS…SPTP), and 378-416 (MTLS…TPLP). N-linked (GlcNAc...) asparagine glycans are attached at residues Asn364 and Asn389. The GPI-anchor amidated serine moiety is linked to residue Ser417. Positions 418-440 (VANAWKVNASFLLLLNVVVMLAV) are cleaved as a propeptide — removed in mature form. A glycan (N-linked (GlcNAc...) asparagine) is linked at Asn425.

Binds to RTN4R. In terms of processing, O-glycosylated in its Ser/Thr-rich repeat domain. Oligodendrocytes and myelin of the central nervous system.

It is found in the cell membrane. Its function is as follows. Cell adhesion molecule contributing to the interactive process required for myelination in the central nervous system. The protein is Oligodendrocyte-myelin glycoprotein (OMG) of Homo sapiens (Human).